We begin with the raw amino-acid sequence, 128 residues long: Cytochrome b (128 aa).

3 helical membrane passes run 25-45, 69-90, and 105-125; these read FGSM…FLAI, WIMQ…YIHI, and WLSG…XMCY. H75 and H89 together coordinate heme b. Residue H126 participates in a ubiquinone binding.

Belongs to the cytochrome b family. As to quaternary structure, the cytochrome bc1 complex contains 3 respiratory subunits (MT-CYB, CYC1 and UQCRFS1), 2 core proteins (UQCRC1 and UQCRC2) and probably 6 low-molecular weight proteins. It depends on heme b as a cofactor.

The protein localises to the mitochondrion inner membrane. Component of the ubiquinol-cytochrome c reductase complex (complex III or cytochrome b-c1 complex) that is part of the mitochondrial respiratory chain. The b-c1 complex mediates electron transfer from ubiquinol to cytochrome c. Contributes to the generation of a proton gradient across the mitochondrial membrane that is then used for ATP synthesis. The chain is Cytochrome b (MT-CYB) from Crotalus viridis viridis (Prairie rattlesnake).